The following is a 563-amino-acid chain: Pyruvate decarboxylase isozyme 1 (563 aa).

N-acetylserine is present on serine 2. The pyruvate site is built by aspartate 28, histidine 115, and tyrosine 157. Omega-N-methylarginine is present on arginine 161. Residue lysine 212 forms a Glycyl lysine isopeptide (Lys-Gly) (interchain with G-Cter in ubiquitin) linkage. Serine 223 bears the Phosphoserine mark. Arginine 224 contacts pyruvate. Lysine 233 is covalently cross-linked (Glycyl lysine isopeptide (Lys-Gly) (interchain with G-Cter in ubiquitin)). At threonine 266 the chain carries Phosphothreonine. Residues lysine 269 and lysine 332 each participate in a glycyl lysine isopeptide (Lys-Gly) (interchain with G-Cter in ubiquitin) cross-link. Phosphothreonine occurs at positions 336 and 353. Thiamine diphosphate is bound by residues threonine 390 and glycine 413 to isoleucine 415. Aspartate 444 contributes to the Mg(2+) binding site. Thiamine diphosphate-binding positions include glycine 445 to serine 446 and asparagine 471 to isoleucine 476. Residues asparagine 471 and glycine 473 each coordinate Mg(2+). A pyruvate-binding site is contributed by glutamate 477. Glycyl lysine isopeptide (Lys-Gly) (interchain with G-Cter in ubiquitin) cross-links involve residues lysine 484, lysine 505, and lysine 520. Phosphothreonine is present on threonine 522. At serine 526 the chain carries Phosphoserine.

It belongs to the TPP enzyme family. As to quaternary structure, homotetramer. Mg(2+) is required as a cofactor. Thiamine diphosphate serves as cofactor. In terms of processing, cleavage of N-terminal methionine and N-terminal acetylation by NAT1/ARD1.

The protein resides in the cytoplasm. Its subcellular location is the nucleus. It catalyses the reaction pyruvate + H(+) = acetaldehyde + CO2. The catalysed reaction is 3-methyl-2-oxobutanoate + H(+) = 2-methylpropanal + CO2. The enzyme catalyses (S)-3-methyl-2-oxopentanoate + H(+) = 2-methylbutanal + CO2. It carries out the reaction indole-3-pyruvate + H(+) = indole-3-acetaldehyde + CO2. It catalyses the reaction 3-phenylpyruvate + H(+) = 2-phenylacetaldehyde + CO2. The catalysed reaction is 2-oxobutanoate + H(+) = propanal + CO2. The enzyme catalyses 2-oxopentanoate + H(+) = butanal + CO2. It carries out the reaction 2 acetaldehyde = acetoin. It catalyses the reaction acetaldehyde + pyruvate + H(+) = acetoin + CO2. Its pathway is fermentation; ethanol fermentation. It functions in the pathway amino-acid degradation; Ehrlich pathway. With respect to regulation, allosterically activated by its substrate, pyruvate. In terms of biological role, major of three pyruvate decarboxylases (PDC1, PDC5, PDC6) implicated in the nonoxidative conversion of pyruvate to acetaldehyde and carbon dioxide during alcoholic fermentation. Most of the produced acetaldehyde is subsequently reduced to ethanol, but some is required for cytosolic acetyl-CoA production for biosynthetic pathways. The enzyme is also one of five 2-oxo acid decarboxylases (PDC1, PDC5, PDC6, ARO10, and THI3) able to decarboxylate more complex 2-oxo acids (alpha-ketoacids) than pyruvate, which seem mainly involved in amino acid catabolism. Here the enzyme catalyzes the decarboxylation of amino acids, which, in a first step, have been transaminated to the corresponding 2-oxo acids. In a third step, the resulting aldehydes are reduced to alcohols, collectively referred to as fusel oils or alcohols. Its preferred substrates are the transaminated amino acids derived from threonine (2-oxobutanoate), norvaline (2-oxopentanoate), valine (3-methyl-2-oxobutanoate, also alpha-keto-isovalerate), isoleucine ((3S)-3-methyl-2-oxopentanoate, also alpha-keto-beta-methylvalerate), phenylalanine (phenylpyruvate), and tryptophan (3-(indol-3-yl)pyruvate), whereas transaminated leucine is no substrate. In a side-reaction the carbanionic intermediate (or active aldehyde) generated by decarboxylation or by activation of an aldehyde can react with an aldehyde via condensation (or carboligation) yielding a 2-hydroxy ketone, collectively called acyloins. The protein is Pyruvate decarboxylase isozyme 1 of Saccharomyces cerevisiae (strain ATCC 204508 / S288c) (Baker's yeast).